Here is a 65-residue protein sequence, read N- to C-terminus: Protein TrbD (65 aa).

In Escherichia coli (strain K12), this protein is Protein TrbD (trbD).